The primary structure comprises 269 residues: Imidazole glycerol phosphate synthase subunit HisF (269 aa).

Residues Asp-23 and Asp-142 contribute to the active site.

The protein belongs to the HisA/HisF family. As to quaternary structure, heterodimer of HisH and HisF.

It is found in the cytoplasm. The enzyme catalyses 5-[(5-phospho-1-deoxy-D-ribulos-1-ylimino)methylamino]-1-(5-phospho-beta-D-ribosyl)imidazole-4-carboxamide + L-glutamine = D-erythro-1-(imidazol-4-yl)glycerol 3-phosphate + 5-amino-1-(5-phospho-beta-D-ribosyl)imidazole-4-carboxamide + L-glutamate + H(+). Its pathway is amino-acid biosynthesis; L-histidine biosynthesis; L-histidine from 5-phospho-alpha-D-ribose 1-diphosphate: step 5/9. Its function is as follows. IGPS catalyzes the conversion of PRFAR and glutamine to IGP, AICAR and glutamate. The HisF subunit catalyzes the cyclization activity that produces IGP and AICAR from PRFAR using the ammonia provided by the HisH subunit. The protein is Imidazole glycerol phosphate synthase subunit HisF of Bordetella parapertussis (strain 12822 / ATCC BAA-587 / NCTC 13253).